Consider the following 297-residue polypeptide: HTH-type transcriptional regulator AceR (297 aa).

Residues 1 to 60 (MNINQEQLLMFQAVMETGSFSAAARKLGKVPSAVSMSIANLEIDLNLTLFERKGREPTPT) enclose the HTH lysR-type domain. The segment at residues 20–39 (FSAAARKLGKVPSAVSMSIA) is a DNA-binding region (H-T-H motif).

The protein belongs to the LysR transcriptional regulatory family. As to quaternary structure, homodimer and homotetramer. Binding of chlorhexidine at the inducer-binding domain causes a quaternary structural change that favors interactions between dimers to form tetramers.

It localises to the cytoplasm. Regulates the expression of the AceI transporter. Binds DNA and chlorhexidine. Binds to regulatory sites within the intergenic region between the aceI and aceR genes, and affects the interaction between RNA polymerase (RNAP) and promoter DNA both in the presence and in the absence of chlorhexidine. In the absence of chlorhexidine, prevents transcription of the aceI gene by disrupting interactions between the promoter DNA and RNAP. In the presence of chlorhexidine, activates expression of aceI. When AceR interacts with chlorhexidine, it undergoes a conformational change and the tetrameric form either releases the DNA or shifts the position of the DNA-binding region to allow RNAP to bind onto the promoter DNA to proceed with aceI transcription. This is HTH-type transcriptional regulator AceR from Acinetobacter baumannii (strain ATCC 17978 / DSM 105126 / CIP 53.77 / LMG 1025 / NCDC KC755 / 5377).